A 112-amino-acid chain; its full sequence is Putative pterin-4-alpha-carbinolamine dehydratase (112 aa).

It belongs to the pterin-4-alpha-carbinolamine dehydratase family.

It catalyses the reaction (4aS,6R)-4a-hydroxy-L-erythro-5,6,7,8-tetrahydrobiopterin = (6R)-L-erythro-6,7-dihydrobiopterin + H2O. This chain is Putative pterin-4-alpha-carbinolamine dehydratase, found in Syntrophotalea carbinolica (strain DSM 2380 / NBRC 103641 / GraBd1) (Pelobacter carbinolicus).